A 149-amino-acid polypeptide reads, in one-letter code: Flavodoxin YqcA (149 aa).

Residues I4–G145 form the Flavodoxin-like domain. Residues T10–S15 and N99–C101 contribute to the FMN site.

This sequence belongs to the flavodoxin family. MioC subfamily. As to quaternary structure, monomer. It depends on FMN as a cofactor.

Probable electron transporter. The chain is Flavodoxin YqcA (yqcA) from Escherichia coli (strain K12).